The sequence spans 243 residues: Carboxy-S-adenosyl-L-methionine synthase (243 aa).

S-adenosyl-L-methionine contacts are provided by residues tyrosine 40, 65–67, 90–91, 118–119, asparagine 133, and arginine 200; these read GCS, DN, and DI.

It belongs to the class I-like SAM-binding methyltransferase superfamily. Cx-SAM synthase family. As to quaternary structure, homodimer.

It catalyses the reaction prephenate + S-adenosyl-L-methionine = carboxy-S-adenosyl-L-methionine + 3-phenylpyruvate + H2O. Functionally, catalyzes the conversion of S-adenosyl-L-methionine (SAM) to carboxy-S-adenosyl-L-methionine (Cx-SAM). This chain is Carboxy-S-adenosyl-L-methionine synthase, found in Shewanella piezotolerans (strain WP3 / JCM 13877).